The following is a 382-amino-acid chain: Intermediate transcription factor 3 large subunit (382 aa).

It belongs to the orthopoxvirus OPG150 family. In terms of assembly, heterodimerizes with protein A8 to form the virus intermediate transcription factor (VITF)-3.

Acts with RNA polymerase to initiate transcription from intermediate gene promoters. The chain is Intermediate transcription factor 3 large subunit (OPG150) from Bos taurus (Bovine).